The following is a 213-amino-acid chain: Orotate phosphoribosyltransferase (213 aa).

Lys-25 contributes to the 5-phospho-alpha-D-ribose 1-diphosphate binding site. 33–34 contributes to the orotate binding site; sequence FF. Residues 71–72, Arg-98, Lys-99, Lys-102, His-104, and 124–132 each bind 5-phospho-alpha-D-ribose 1-diphosphate; these read YK and DDVITSGTA. The orotate site is built by Thr-128 and Arg-156.

It belongs to the purine/pyrimidine phosphoribosyltransferase family. PyrE subfamily. As to quaternary structure, homodimer. It depends on Mg(2+) as a cofactor.

The enzyme catalyses orotidine 5'-phosphate + diphosphate = orotate + 5-phospho-alpha-D-ribose 1-diphosphate. It participates in pyrimidine metabolism; UMP biosynthesis via de novo pathway; UMP from orotate: step 1/2. Catalyzes the transfer of a ribosyl phosphate group from 5-phosphoribose 1-diphosphate to orotate, leading to the formation of orotidine monophosphate (OMP). The chain is Orotate phosphoribosyltransferase from Buchnera aphidicola subsp. Acyrthosiphon pisum (strain 5A).